A 156-amino-acid polypeptide reads, in one-letter code: Small ribosomal subunit protein uS7 (156 aa).

The protein belongs to the universal ribosomal protein uS7 family. As to quaternary structure, part of the 30S ribosomal subunit. Contacts proteins S9 and S11.

Its function is as follows. One of the primary rRNA binding proteins, it binds directly to 16S rRNA where it nucleates assembly of the head domain of the 30S subunit. Is located at the subunit interface close to the decoding center, probably blocks exit of the E-site tRNA. In Buchnera aphidicola subsp. Cinara cedri (strain Cc), this protein is Small ribosomal subunit protein uS7.